The chain runs to 266 residues: Vitamin B12-binding protein (266 aa).

The N-terminal stretch at 1-22 is a signal peptide; the sequence is MAKSLFRALVALSFLAPLWLNA. Residues 25–266 form the Fe/B12 periplasmic-binding domain; it reads RVITLSPANT…QLCNALSQVD (242 aa). Cyanocob(III)alamin contacts are provided by residues Tyr-50 and 242–246; that span reads DWFER. A disulfide bond links Cys-183 and Cys-259.

Belongs to the BtuF family. The complex is composed of two ATP-binding proteins (BtuD), two transmembrane proteins (BtuC) and a solute-binding protein (BtuF).

Its subcellular location is the periplasm. Its function is as follows. Part of the ABC transporter complex BtuCDF involved in vitamin B12 import. Binds vitamin B12 and delivers it to the periplasmic surface of BtuC. The chain is Vitamin B12-binding protein from Escherichia coli O6:H1 (strain CFT073 / ATCC 700928 / UPEC).